Consider the following 169-residue polypeptide: Keratin-associated protein 9-7 (169 aa).

A run of 17 repeats spans residues Cys-8 to Thr-12, Cys-13 to Thr-17, Cys-32 to Ser-36, Cys-37 to Ser-41, Cys-46 to Thr-50, Cys-51 to Thr-55, Cys-56 to Thr-60, Cys-61 to Thr-65, Cys-75 to Pro-79, Cys-80 to Ile-84, Cys-85 to Ser-89, Cys-90 to Thr-94, Cys-100 to Ser-104, Cys-139 to Ala-143, Cys-144 to Thr-148, Cys-149 to Thr-153, and Cys-163 to Ala-167. The interval Cys-8–Ala-167 is 17 X 5 AA repeats of C-C-[VGSREQH]-[SQTPN]-[STPAI].

This sequence belongs to the KRTAP type 9 family. As to quaternary structure, interacts with hair keratins.

Its function is as follows. In the hair cortex, hair keratin intermediate filaments are embedded in an interfilamentous matrix, consisting of hair keratin-associated proteins (KRTAP), which are essential for the formation of a rigid and resistant hair shaft through their extensive disulfide bond cross-linking with abundant cysteine residues of hair keratins. The matrix proteins include the high-sulfur and high-glycine-tyrosine keratins. The protein is Keratin-associated protein 9-7 of Homo sapiens (Human).